The primary structure comprises 556 residues: Glutamine--tRNA ligase (556 aa).

Residues 34–44 (PEPNGYLHIGH) carry the 'HIGH' region motif. Residues 35-37 (EPN) and 41-47 (HIGHAKS) each bind ATP. L-glutamine is bound by residues Asp67 and Tyr212. ATP is bound by residues Thr231, 263 to 264 (RL), and 271 to 273 (MSK). A 'KMSKS' region motif is present at residues 270–274 (VMSKR).

This sequence belongs to the class-I aminoacyl-tRNA synthetase family. As to quaternary structure, monomer.

It is found in the cytoplasm. The enzyme catalyses tRNA(Gln) + L-glutamine + ATP = L-glutaminyl-tRNA(Gln) + AMP + diphosphate. The sequence is that of Glutamine--tRNA ligase from Nitrosomonas europaea (strain ATCC 19718 / CIP 103999 / KCTC 2705 / NBRC 14298).